A 350-amino-acid chain; its full sequence is Small ribosomal subunit biogenesis GTPase RsgA (350 aa).

The span at 1-17 shows a compositional bias: polar residues; sequence MSKNKLSKGQQRRVNAN. Residues 1–24 are disordered; it reads MSKNKLSKGQQRRVNANHQRRLKT. The CP-type G domain occupies 104 to 273; sequence TSVLTRPDFY…VIDSPGVREF (170 aa). Residues 160-163 and 214-222 contribute to the GTP site; these read NKID and GQSGVGKSS. Residues C297, C302, H304, and C310 each coordinate Zn(2+).

This sequence belongs to the TRAFAC class YlqF/YawG GTPase family. RsgA subfamily. As to quaternary structure, monomer. Associates with 30S ribosomal subunit, binds 16S rRNA. The cofactor is Zn(2+).

It localises to the cytoplasm. Its function is as follows. One of several proteins that assist in the late maturation steps of the functional core of the 30S ribosomal subunit. Helps release RbfA from mature subunits. May play a role in the assembly of ribosomal proteins into the subunit. Circularly permuted GTPase that catalyzes slow GTP hydrolysis, GTPase activity is stimulated by the 30S ribosomal subunit. This chain is Small ribosomal subunit biogenesis GTPase RsgA, found in Salmonella schwarzengrund (strain CVM19633).